Reading from the N-terminus, the 87-residue chain is MVQPTPYININIFMLKINSFENASAVNVGQNLLAEWQNSDKKNQGYGQNFGDASGFMGTRSHVDDRDQIDSPASFESEAVNSSIKRK.

Residues 43–87 (NQGYGQNFGDASGFMGTRSHVDDRDQIDSPASFESEAVNSSIKRK) are disordered.

This is an uncharacterized protein from Bacillus subtilis (strain 168).